A 210-amino-acid polypeptide reads, in one-letter code: Cyclin-U1-1 (210 aa).

It belongs to the cyclin family. Cyclin U/P subfamily. In terms of assembly, interacts with CDKA-1. In terms of tissue distribution, expressed in roots and flowers. Expressed in the shoot apex, leaf primordia and young leaves.

This is Cyclin-U1-1 (CYCU1-1) from Arabidopsis thaliana (Mouse-ear cress).